A 61-amino-acid chain; its full sequence is Nakoroxin (61 aa).

4 disulfide bridges follow: Cys3-Cys19, Cys12-Cys37, Cys41-Cys49, and Cys50-Cys55.

The protein belongs to the three-finger toxin family. Short-chain subfamily. Expressed by the venom gland.

The protein localises to the secreted. In terms of biological role, shows no cytotoxicity and does not inhibit the binding of alpha-bungarotoxin to nicotinic acetylcholine receptors of muscle and alpha-7/CHRNA7 types. However, it potentiates the binding of alpha-bungarotoxin to the acetylcholine-binding protein from Lymnaea stagnalis. This is Nakoroxin from Naja kaouthia (Monocled cobra).